The chain runs to 791 residues: Exocyst complex component EXO84 (791 aa).

Residues 16 to 101 (RNRKSRAVWQ…GDLNSNKKQS (86 aa)) are disordered. Residues 23 to 42 (VWQNNNTTTHNNPYANLSTG) show a composition bias toward polar residues. A compositionally biased stretch (low complexity) spans 70–83 (TGNNNKSNTSGNLL). Residues 190 to 229 (RDIKDNINQNQKNILQLTKDLKETQEELIELRGTTKELYE) adopt a coiled-coil conformation. Lys193 participates in a covalent cross-link: Glycyl lysine isopeptide (Lys-Gly) (interchain with G-Cter in ubiquitin). Basic and acidic residues predominate over residues 247–256 (EPETQKELHS). Disordered regions lie at residues 247-271 (EPETQKELHSPQKSNQLGIPSNKKK) and 432-495 (ERLL…NSTD). Polar residues predominate over residues 438-447 (RLSSPSNNNG). The span at 448 to 460 (DSKEEKRQLRESL) shows a compositional bias: basic and acidic residues. The stretch at 521–577 (ANNGKSQFFNEIKTLEDRLDDVDVEISHNQYAEAVELISIIESKLRNIENALTNQRN) forms a coiled coil.

This sequence belongs to the EXO84 family. As to quaternary structure, component of the exocyst complex.

It localises to the cytoplasmic vesicle. The protein resides in the secretory vesicle. Functionally, involved in the secretory pathway as part of the exocyst complex which tethers secretory vesicles to the sites of exocytosis. Plays a role in both the assembly of the exocyst and the polarization of this complex to specific sites of the plasma membrane for exocytosis. Also involved in assembly of the spliceosome. The sequence is that of Exocyst complex component EXO84 (EXO84) from Candida albicans (strain SC5314 / ATCC MYA-2876) (Yeast).